Reading from the N-terminus, the 451-residue chain is Chromosomal replication initiator protein DnaA (451 aa).

The interval 1 to 77 (MTENEQIFWN…EVYNAQISVD (77 aa)) is domain I, interacts with DnaA modulators. The domain II stretch occupies residues 77–110 (DYVFEEDLMIEQNQTKINQKPKQQALNSLPTVTS). The tract at residues 111 to 329 (DLNPKYSFEN…GALKDISLVA (219 aa)) is domain III, AAA+ region. ATP-binding residues include G155, G157, K158, and T159. A domain IV, binds dsDNA region spans residues 330–451 (NFKQIDTITV…EIETIKNKIK (122 aa)).

The protein belongs to the DnaA family. In terms of assembly, oligomerizes as a right-handed, spiral filament on DNA at oriC.

Its subcellular location is the cytoplasm. Functionally, plays an essential role in the initiation and regulation of chromosomal replication. ATP-DnaA binds to the origin of replication (oriC) to initiate formation of the DNA replication initiation complex once per cell cycle. Binds the DnaA box (a 9 base pair repeat at the origin) and separates the double-stranded (ds)DNA. Forms a right-handed helical filament on oriC DNA; dsDNA binds to the exterior of the filament while single-stranded (ss)DNA is stabiized in the filament's interior. The ATP-DnaA-oriC complex binds and stabilizes one strand of the AT-rich DNA unwinding element (DUE), permitting loading of DNA polymerase. After initiation quickly degrades to an ADP-DnaA complex that is not apt for DNA replication. Binds acidic phospholipids. This chain is Chromosomal replication initiator protein DnaA, found in Streptococcus pyogenes serotype M4 (strain MGAS10750).